Reading from the N-terminus, the 186-residue chain is Elongation factor P (186 aa).

The protein belongs to the elongation factor P family.

It localises to the cytoplasm. It functions in the pathway protein biosynthesis; polypeptide chain elongation. In terms of biological role, involved in peptide bond synthesis. Stimulates efficient translation and peptide-bond synthesis on native or reconstituted 70S ribosomes in vitro. Probably functions indirectly by altering the affinity of the ribosome for aminoacyl-tRNA, thus increasing their reactivity as acceptors for peptidyl transferase. In Beutenbergia cavernae (strain ATCC BAA-8 / DSM 12333 / CCUG 43141 / JCM 11478 / NBRC 16432 / NCIMB 13614 / HKI 0122), this protein is Elongation factor P.